The chain runs to 1241 residues: Interphotoreceptor matrix proteoglycan 2 (1241 aa).

The N-terminal stretch at 1 to 28 (MIMFLPLGRISLGILILFLTGGNLVSVS) is a signal peptide. Over 29–1104 (EEIQDRMHAV…CEEFVSEPFV (1076 aa)) the chain is Extracellular. O-linked (GalNAc...) threonine glycosylation is present at Thr193. A disordered region spans residues 206 to 234 (AASERSAASPQESISNEIENVTEQPTPPA). Residues 211 to 229 (SAASPQESISNEIENVTEQ) show a composition bias toward polar residues. Residue Asn225 is glycosylated (N-linked (GlcNAc...) asparagine). Thr231 carries O-linked (GalNAc...) threonine glycosylation. The 115-residue stretch at 235-349 (AEQIAEFSIQ…KPTAVYTISN (115 aa)) folds into the SEA 1 domain. The tract at residues 255-263 (RDPSSALYR) is hyaluronan-binding motif involved in chondroitin sulfate A-binding. Asn297, Asn316, and Asn366 each carry an N-linked (GlcNAc...) asparagine glycan. O-linked (GalNAc...) threonine glycans are attached at residues Thr429, Thr430, and Thr431. Positions 431 to 443 (TISPFGFSSGPPS) are enriched in low complexity. Disordered stretches follow at residues 431–456 (TISP…STLG) and 500–520 (VAPE…TEES). An O-linked (GalNAc...) threonine glycan is attached at Thr817. Asn841, Asn945, and Asn959 each carry an N-linked (GlcNAc...) asparagine glycan. The SEA 2 domain occupies 900–1013 (GALVVFFSLR…YSLDVESGDD (114 aa)). EGF-like domains are found at residues 1013 to 1054 (DANP…LPCQ) and 1055 to 1096 (SVCD…QHCE). Disulfide bonds link Cys1017–Cys1028, Cys1022–Cys1039, Cys1041–Cys1053, Cys1057–Cys1070, Cys1064–Cys1080, and Cys1082–Cys1095. The segment at 1083-1091 (RVGSNWWYR) is hyaluronan-binding motif involved in chondroitin sulfate C-binding. A helical transmembrane segment spans residues 1105-1125 (IGITIASVVSLLLVASAVVFF). Residues 1126-1241 (LAKMLQAQNV…FVREHEMEEL (116 aa)) are Cytoplasmic-facing. Residues 1128–1136 (KMLQAQNVR) are hyaluronan-binding motif involved in chondroitin sulfate A- and C-binding. The tract at residues 1139 to 1145 (RQRPTNR) is hyaluronan-binding motif involved in chondroitin sulfate C-binding. A hyaluronan-binding motif involved in chondroitin sulfate A- and C-binding motif region spans residues 1210 to 1218 (KEEIQERMR).

In terms of tissue distribution, expressed in the pineal gland and the outer layer of the retina.

The protein localises to the photoreceptor outer segment membrane. Its subcellular location is the photoreceptor inner segment membrane. The protein resides in the secreted. It is found in the extracellular space. It localises to the extracellular matrix. The protein localises to the interphotoreceptor matrix. In terms of biological role, chondroitin sulfate- and hyaluronan-binding proteoglycan involved in the organization of interphotoreceptor matrix; may participate in the maturation and maintenance of the light-sensitive photoreceptor outer segment. Binds heparin. The protein is Interphotoreceptor matrix proteoglycan 2 (Impg2) of Rattus norvegicus (Rat).